Reading from the N-terminus, the 440-residue chain is COP9 signalosome complex subunit 4 (440 aa).

In terms of domain architecture, PCI spans 216–386 (SNRQFLAASQ…RIIYFESGLE (171 aa)).

This sequence belongs to the CSN4 family. In terms of assembly, component of the COP9 signalosome (CSN) complex.

It localises to the cytoplasm. The protein localises to the nucleus. In terms of biological role, component of the COP9 signalosome (CSN) complex that acts as an regulator of the ubiquitin (Ubl) conjugation pathway by mediating the deneddylation of the cullin subunit of SCF-type E3 ubiquitin-protein ligase complexes. The CSN complex is involved in the regulation of the circadian clock through its control of the stability of the SCF(FWD1) complex. In Neurospora crassa (strain ATCC 24698 / 74-OR23-1A / CBS 708.71 / DSM 1257 / FGSC 987), this protein is COP9 signalosome complex subunit 4 (csn-4).